The following is a 556-amino-acid chain: 2-succinyl-5-enolpyruvyl-6-hydroxy-3-cyclohexene-1-carboxylate synthase (556 aa).

This sequence belongs to the TPP enzyme family. MenD subfamily. In terms of assembly, homodimer. Requires Mg(2+) as cofactor. Mn(2+) serves as cofactor. The cofactor is thiamine diphosphate.

The catalysed reaction is isochorismate + 2-oxoglutarate + H(+) = 5-enolpyruvoyl-6-hydroxy-2-succinyl-cyclohex-3-ene-1-carboxylate + CO2. The protein operates within quinol/quinone metabolism; 1,4-dihydroxy-2-naphthoate biosynthesis; 1,4-dihydroxy-2-naphthoate from chorismate: step 2/7. Its pathway is quinol/quinone metabolism; menaquinone biosynthesis. Its function is as follows. Catalyzes the thiamine diphosphate-dependent decarboxylation of 2-oxoglutarate and the subsequent addition of the resulting succinic semialdehyde-thiamine pyrophosphate anion to isochorismate to yield 2-succinyl-5-enolpyruvyl-6-hydroxy-3-cyclohexene-1-carboxylate (SEPHCHC). This chain is 2-succinyl-5-enolpyruvyl-6-hydroxy-3-cyclohexene-1-carboxylate synthase, found in Escherichia coli (strain K12 / MC4100 / BW2952).